Consider the following 422-residue polypeptide: Probable biofilm formation methyltransferase WspC (422 aa).

Residues 1–264 (MNDRFERLLK…LSFVFRRTSE (264 aa)) enclose the CheR-type methyltransferase domain. Residues Thr67, Arg71, Glu108, Asp132, 186–187 (NL), and 205–206 (RN) each bind S-adenosyl-L-methionine. The segment at 289–316 (ASIRPSPPPPAKPRQRLSSLVPPASGQP) is disordered. A TPR repeat occupies 354-387 (ATVFYWLGLLSDVAGQEQEAQDFYRKALYLEPQH).

In terms of assembly, monomer.

Functionally, involved in biofilm formation. This chain is Probable biofilm formation methyltransferase WspC (wspC), found in Pseudomonas aeruginosa (strain ATCC 15692 / DSM 22644 / CIP 104116 / JCM 14847 / LMG 12228 / 1C / PRS 101 / PAO1).